The primary structure comprises 732 residues: Bromodomain-containing factor 1 (732 aa).

A compositionally biased stretch (polar residues) spans 1–22 (MSETFPETNTPVQTPSTESFVN). Disordered regions lie at residues 1-207 (MSET…NLPE), 324-380 (TNVA…ETKP), 491-517 (NKPV…EDNV), 556-600 (REQQ…TPPQ), and 700-732 (VNGQ…SEEE). The segment covering 37–51 (SQDSDSNQQSSHQEP) has biased composition (low complexity). The span at 89–100 (ASQTGVIQTEVS) shows a compositional bias: polar residues. Acidic residues predominate over residues 137–147 (EAPEENPQEEV). The Bromo 1 domain occupies 206-315 (PENPIPQHQA…AQFEKLMVKV (110 aa)). The segment covering 327–338 (AEATSVATSPTT) has biased composition (polar residues). Residues 370 to 380 (KSKELPYETKP) are compositionally biased toward basic and acidic residues. The Bromo 2 domain maps to 383 to 492 (KKVAAELRFC…AVFDKKWANK (110 aa)). Positions 529 to 569 (AIQVMENQIIRMRKELDELKKEHLKKLREQQAARKKKKQQK) form a coiled coil. Residues 561-579 (ARKKKKQQKGKRRAPKAKH) show a composition bias toward basic residues. Over residues 590 to 600 (PPEPPKLTPPQ) the composition is skewed to pro residues. The NET domain occupies 593–672 (PPKLTPPQPV…GDKALKNSAG (80 aa)). The segment covering 718–732 (ESSEDEASSESSEEE) has biased composition (acidic residues).

This sequence belongs to the BET family.

Its subcellular location is the nucleus. In terms of biological role, transcription factor involved in the expression of a broad class of genes including snRNAs. Required for sporulation and DNA-damage repair. Prevents the spreading of SIR silencing at telomeres and protects histone H4, but not H3, from deacetylation. The protein is Bromodomain-containing factor 1 (BDF1) of Candida albicans (strain SC5314 / ATCC MYA-2876) (Yeast).